The chain runs to 270 residues: Dermonecrotic toxin LhSicTox-alphaIA2aiii (270 aa).

H2 is a catalytic residue. Positions 22 and 24 each coordinate Mg(2+). Residue H38 is the Nucleophile of the active site. 2 disulfides stabilise this stretch: C42–C48 and C44–C187. Mg(2+) is bound at residue D82.

The protein belongs to the arthropod phospholipase D family. Class II subfamily. Mg(2+) is required as a cofactor. In terms of tissue distribution, expressed by the venom gland.

The protein resides in the secreted. The catalysed reaction is an N-(acyl)-sphingosylphosphocholine = an N-(acyl)-sphingosyl-1,3-cyclic phosphate + choline. It carries out the reaction an N-(acyl)-sphingosylphosphoethanolamine = an N-(acyl)-sphingosyl-1,3-cyclic phosphate + ethanolamine. It catalyses the reaction a 1-acyl-sn-glycero-3-phosphocholine = a 1-acyl-sn-glycero-2,3-cyclic phosphate + choline. The enzyme catalyses a 1-acyl-sn-glycero-3-phosphoethanolamine = a 1-acyl-sn-glycero-2,3-cyclic phosphate + ethanolamine. Functionally, dermonecrotic toxins cleave the phosphodiester linkage between the phosphate and headgroup of certain phospholipids (sphingolipid and lysolipid substrates), forming an alcohol (often choline) and a cyclic phosphate. This toxin acts on sphingomyelin (SM). It may also act on ceramide phosphoethanolamine (CPE), lysophosphatidylcholine (LPC) and lysophosphatidylethanolamine (LPE), but not on lysophosphatidylserine (LPS), and lysophosphatidylglycerol (LPG). It acts by transphosphatidylation, releasing exclusively cyclic phosphate products as second products. Induces dermonecrosis, hemolysis, increased vascular permeability, edema, inflammatory response, and platelet aggregation. The chain is Dermonecrotic toxin LhSicTox-alphaIA2aiii from Loxosceles hirsuta (Recluse spider).